The chain runs to 874 residues: Chaperone protein ClpB 1 (874 aa).

One can recognise a Clp R domain in the interval 6-148 (PNQFTEKAWE…RQIIQQIRGS (143 aa)). 2 repeat regions span residues 9 to 73 (FTEK…IARQ) and 85 to 148 (LGRS…IRGS). Positions 161-342 (EALEKYGRDL…RRFQQVFVDQ (182 aa)) are NBD1. 208–215 (GEPGVGKT) is a binding site for ATP. The linker stretch occupies residues 343-551 (PTVEDTISIL…IAEIISKWTG (209 aa)). A coiled-coil region spans residues 393 to 527 (IDLVDESAAR…MEGGLATTHT (135 aa)). An NBD2 region spans residues 561–772 (EMQKLLNLDE…RVDETIIFHS (212 aa)). 611 to 618 (GPTGVGKT) provides a ligand contact to ATP. The segment at 773–874 (LRKDQLQQIV…IATPTAVPLS (102 aa)) is C-terminal.

It belongs to the ClpA/ClpB family. In terms of assembly, homohexamer. The oligomerization is ATP-dependent.

The protein resides in the cytoplasm. Its function is as follows. Part of a stress-induced multi-chaperone system, it is involved in the recovery of the cell from heat-induced damage, in cooperation with DnaK, DnaJ and GrpE. Acts before DnaK, in the processing of protein aggregates. Protein binding stimulates the ATPase activity; ATP hydrolysis unfolds the denatured protein aggregates, which probably helps expose new hydrophobic binding sites on the surface of ClpB-bound aggregates, contributing to the solubilization and refolding of denatured protein aggregates by DnaK. Necessary for thermotolerance. The protein is Chaperone protein ClpB 1 (clpB1) of Synechococcus elongatus (strain ATCC 33912 / PCC 7942 / FACHB-805) (Anacystis nidulans R2).